The primary structure comprises 167 residues: U-scoloptoxin-Er5c (167 aa).

A signal peptide spans 1 to 22; that stretch reads MKTNCEFPLLCLLIVLVANVEG. The propeptide occupies 23–94; that stretch reads EVEDTGLKMV…KRLWRNWERR (72 aa). 3 RLWRNWE repeats span residues 34–40, 61–67, and 86–92; these read RLWRNWE. Q95 carries the pyrrolidone carboxylic acid modification. The RLWRNWE 4; approximate repeat unit spans residues 107–113; sequence ELWRNWE. A propeptide spanning residues 112 to 118 is cleaved from the precursor; that stretch reads WEDLKRR. Residue Q119 is modified to Pyrrolidone carboxylic acid. The stretch at 134-140 is one RLWRNWE 5 repeat; sequence RLWRNWE. The propeptide occupies 139–167; sequence WEDNHATLRKRSADSLSRQKRLGRERGKE. Positions 147 to 167 are disordered; that stretch reads RKRSADSLSRQKRLGRERGKE.

This sequence belongs to the scoloptoxin-08 family. In terms of tissue distribution, expressed by the venom gland.

The protein localises to the secreted. This Ethmostigmus rubripes (Giant centipede) protein is U-scoloptoxin-Er5c.